Here is a 163-residue protein sequence, read N- to C-terminus: Nodulin-13 (163 aa).

Kinetin contacts are provided by Q68 and Y82. N(6)-dimethylallyladenine is bound by residues Q68 and Y82. Positions 68, 82, and 133 each coordinate trans-zeatin.

It belongs to the BetVI family. In terms of assembly, homodimer. As to expression, expressed in nodules, but not in leaves, stems, flowers and roots. Specifically located in the nodule cortex.

Functionally, may be involved in nodule organogenesis rather in the processes related to nitrogen fixation or interactions with the bacteria. May regulate nodulation by controlling the levels of freely available cytokinins. The sequence is that of Nodulin-13 (N13) from Medicago truncatula (Barrel medic).